The primary structure comprises 282 residues: Bifunctional protein FolD (282 aa).

NADP(+) contacts are provided by residues 165-167 and Ile231; that span reads GAS.

Belongs to the tetrahydrofolate dehydrogenase/cyclohydrolase family. In terms of assembly, homodimer.

The enzyme catalyses (6R)-5,10-methylene-5,6,7,8-tetrahydrofolate + NADP(+) = (6R)-5,10-methenyltetrahydrofolate + NADPH. The catalysed reaction is (6R)-5,10-methenyltetrahydrofolate + H2O = (6R)-10-formyltetrahydrofolate + H(+). It participates in one-carbon metabolism; tetrahydrofolate interconversion. Its function is as follows. Catalyzes the oxidation of 5,10-methylenetetrahydrofolate to 5,10-methenyltetrahydrofolate and then the hydrolysis of 5,10-methenyltetrahydrofolate to 10-formyltetrahydrofolate. In Francisella tularensis subsp. mediasiatica (strain FSC147), this protein is Bifunctional protein FolD.